Consider the following 102-residue polypeptide: Small ribosomal subunit protein uS10 (102 aa).

This sequence belongs to the universal ribosomal protein uS10 family. In terms of assembly, part of the 30S ribosomal subunit.

Its function is as follows. Involved in the binding of tRNA to the ribosomes. The polypeptide is Small ribosomal subunit protein uS10 (Pelotomaculum thermopropionicum (strain DSM 13744 / JCM 10971 / SI)).